We begin with the raw amino-acid sequence, 122 residues long: MIFGIGTDMIEINRVVKACERKTFLTKIYTEQEQKLLLSDIRKAASNFAVKEAVVKMFGTGFRAIAPNEIEVLRDNLGKPYVNLYGNAEILAKEHNVERIHVSITNTKELVSAYVIGEIIRE.

Residues Asp-8 and Glu-52 each coordinate Mg(2+).

It belongs to the P-Pant transferase superfamily. AcpS family. Requires Mg(2+) as cofactor.

Its subcellular location is the cytoplasm. It carries out the reaction apo-[ACP] + CoA = holo-[ACP] + adenosine 3',5'-bisphosphate + H(+). Its function is as follows. Transfers the 4'-phosphopantetheine moiety from coenzyme A to a Ser of acyl-carrier-protein. This is Holo-[acyl-carrier-protein] synthase from Lachnoclostridium phytofermentans (strain ATCC 700394 / DSM 18823 / ISDg) (Clostridium phytofermentans).